The following is a 376-amino-acid chain: Homoserine dehydrogenase (376 aa).

Residues asparagine 17 and isoleucine 18 each coordinate NADP(+). Isoleucine 18 is an NAD(+) binding site. Positions 18, 67, 99, and 123 each coordinate NADPH. NADP(+)-binding residues include threonine 99 and lysine 123. Residue threonine 99 coordinates NAD(+). Residues glutamate 150, valine 153, alanine 155, and leucine 157 each coordinate Na(+). Serine 201 is modified (phosphoserine). NADP(+) contacts are provided by glycine 213 and glutamate 216. Residues glutamate 216 and aspartate 227 each coordinate L-homoserine. Residue lysine 231 is the Proton donor of the active site. An NADP(+)-binding site is contributed by glycine 349. Residue glycine 349 participates in NAD(+) binding. Glycine 349 contacts NADPH.

Belongs to the homoserine dehydrogenase family. A metal cation serves as cofactor.

It catalyses the reaction L-homoserine + NADP(+) = L-aspartate 4-semialdehyde + NADPH + H(+). The catalysed reaction is L-homoserine + NAD(+) = L-aspartate 4-semialdehyde + NADH + H(+). It participates in amino-acid biosynthesis; L-methionine biosynthesis via de novo pathway; L-homoserine from L-aspartate: step 3/3. It functions in the pathway amino-acid biosynthesis; L-threonine biosynthesis; L-threonine from L-aspartate: step 3/5. In terms of biological role, catalyzes the conversion of L-aspartate-beta-semialdehyde (L-Asa) to L-homoserine (L-Hse), the third step in the biosynthesis of amino acids that derive from aspartate (the aspartate family of amino acids), including methioinine and threonine, the latter of which is a precursor to isoleucine; production of homoserine leads to a branch-point in the pathway as it can either be O-phosphorylated for processing to threonine, or O-acylated for processing to methionine. The sequence is that of Homoserine dehydrogenase from Schizosaccharomyces pombe (strain 972 / ATCC 24843) (Fission yeast).